A 400-amino-acid polypeptide reads, in one-letter code: Nicotinate phosphoribosyltransferase (400 aa).

Phosphohistidine; by autocatalysis is present on His220.

Belongs to the NAPRTase family. Transiently phosphorylated on a His residue during the reaction cycle. Phosphorylation strongly increases the affinity for substrates and increases the rate of nicotinate D-ribonucleotide production. Dephosphorylation regenerates the low-affinity form of the enzyme, leading to product release.

The enzyme catalyses nicotinate + 5-phospho-alpha-D-ribose 1-diphosphate + ATP + H2O = nicotinate beta-D-ribonucleotide + ADP + phosphate + diphosphate. The protein operates within cofactor biosynthesis; NAD(+) biosynthesis; nicotinate D-ribonucleotide from nicotinate: step 1/1. Its function is as follows. Catalyzes the synthesis of beta-nicotinate D-ribonucleotide from nicotinate and 5-phospho-D-ribose 1-phosphate at the expense of ATP. The chain is Nicotinate phosphoribosyltransferase from Salmonella agona (strain SL483).